A 90-amino-acid chain; its full sequence is Serine-rich and transmembrane domain-containing 2 (90 aa).

Asparagine 11 carries an N-linked (GlcNAc...) asparagine glycan. A helical transmembrane segment spans residues 38–58 (YVGLFLSLLAILLILLFTMLL). The tract at residues 69 to 90 (SDSTESVPQFTDVEMQSRIPTP) is disordered.

Its subcellular location is the membrane. The protein is Serine-rich and transmembrane domain-containing 2 of Homo sapiens (Human).